The following is a 381-amino-acid chain: Cobalt-precorrin-5B C(1)-methyltransferase (381 aa).

It belongs to the CbiD family.

It catalyses the reaction Co-precorrin-5B + S-adenosyl-L-methionine = Co-precorrin-6A + S-adenosyl-L-homocysteine. It functions in the pathway cofactor biosynthesis; adenosylcobalamin biosynthesis; cob(II)yrinate a,c-diamide from sirohydrochlorin (anaerobic route): step 6/10. Functionally, catalyzes the methylation of C-1 in cobalt-precorrin-5B to form cobalt-precorrin-6A. The polypeptide is Cobalt-precorrin-5B C(1)-methyltransferase (Clostridium botulinum (strain Alaska E43 / Type E3)).